The following is a 158-amino-acid chain: MRIGLGYDVHRLVENRKLILGGVEIPYEKGLLGHSDADVLIHAIIDSLLGACALGDIGKHFPDTDSRFSGISSIILLEETGKLLLKSGYAINNIDATIIAQKPKMLPHIENMRKNISIALNIDINKINIKATTEEGLGFTGEMLGISSQSISSVESII.

Asp-8 and His-10 together coordinate a divalent metal cation. 4-CDP-2-C-methyl-D-erythritol 2-phosphate contacts are provided by residues 8–10 (DVH) and 34–35 (HS). His-42 is an a divalent metal cation binding site. 4-CDP-2-C-methyl-D-erythritol 2-phosphate is bound by residues 56-58 (DIG), 61-65 (FPDTD), 100-106 (AQKPKML), 132-135 (TTEE), and Phe-139.

This sequence belongs to the IspF family. As to quaternary structure, homotrimer. The cofactor is a divalent metal cation.

It catalyses the reaction 4-CDP-2-C-methyl-D-erythritol 2-phosphate = 2-C-methyl-D-erythritol 2,4-cyclic diphosphate + CMP. It participates in isoprenoid biosynthesis; isopentenyl diphosphate biosynthesis via DXP pathway; isopentenyl diphosphate from 1-deoxy-D-xylulose 5-phosphate: step 4/6. Functionally, involved in the biosynthesis of isopentenyl diphosphate (IPP) and dimethylallyl diphosphate (DMAPP), two major building blocks of isoprenoid compounds. Catalyzes the conversion of 4-diphosphocytidyl-2-C-methyl-D-erythritol 2-phosphate (CDP-ME2P) to 2-C-methyl-D-erythritol 2,4-cyclodiphosphate (ME-CPP) with a corresponding release of cytidine 5-monophosphate (CMP). The polypeptide is 2-C-methyl-D-erythritol 2,4-cyclodiphosphate synthase (Clostridium beijerinckii (strain ATCC 51743 / NCIMB 8052) (Clostridium acetobutylicum)).